Reading from the N-terminus, the 132-residue chain is MVAENQYYGTGRRKSSSARVFMSKNGSGNIIINKRNIDQYFGRETARMVVLQPLELFDMVSKVDVYVTVKGGGISGQAGAIRHGLTCALMKYNELLRVDLRKAGFVTRDARKVERKKVGLHKARRRPQFSKR.

The protein belongs to the universal ribosomal protein uS9 family.

The chain is Small ribosomal subunit protein uS9 from Baumannia cicadellinicola subsp. Homalodisca coagulata.